We begin with the raw amino-acid sequence, 487 residues long: MAEIRKLKNYINGEWVESKTDQYEDVVNPATKEVLCQVPISTKEDIDYAAQTAAEAFETWSKVAVPRRARILFNFQQLLSQHKEELAHLITIENGKNTKEALGEVGRGIENVEFAAGAPSLMMGDSLASIATDVEAANYRYPIGVVGGIAPFNFPMMVPCWMFPMAIALGNTFILKPSERTPLLTEKLVELFEKAGLPKGVFNVVYGAHDVVNGILEHPEIKAISFVGSKPVGEYVYKKGSEHLKRVQSLTGAKNHTIVLNDANLEDTVTNIVGAAFGSAGERCMACAVVTVEEGIADEFMAKLQEKVADIKIGNGLDDGVFLGPVIREDNKKRTLSYIEKGLEEGARLVCDGRENVSDDGYFVGPTIFDNVTTEMTIWKDEIFAPVLSVIRVKNLKEAIEIANKSEFANGACLFTSNSNAIRYFRENIDAGMLGINLGVPAPMAFFPFSGWKSSFFGTLHANGKDSVDFYTRKKVVTARFPAPDFN.

Residues Ala-150, Phe-152, Lys-176, Glu-179, Arg-180, Ser-229, and Thr-251 each contribute to the NAD(+) site. The active-site Nucleophile is the Cys-284. Glu-382 serves as a coordination point for NAD(+).

The protein belongs to the aldehyde dehydrogenase family. IolA subfamily. Homotetramer.

The enzyme catalyses 3-oxopropanoate + NAD(+) + CoA + H2O = hydrogencarbonate + acetyl-CoA + NADH + H(+). It catalyses the reaction 2-methyl-3-oxopropanoate + NAD(+) + CoA + H2O = propanoyl-CoA + hydrogencarbonate + NADH + H(+). Its pathway is polyol metabolism; myo-inositol degradation into acetyl-CoA; acetyl-CoA from myo-inositol: step 7/7. Catalyzes the oxidation of malonate semialdehyde (MSA) and methylmalonate semialdehyde (MMSA) into acetyl-CoA and propanoyl-CoA, respectively. Is involved in a myo-inositol catabolic pathway. Bicarbonate, and not CO2, is the end-product of the enzymatic reaction. This chain is Malonate-semialdehyde dehydrogenase, found in Bacillus subtilis subsp. natto.